Consider the following 553-residue polypeptide: Protein DA1-related 1 (553 aa).

Residues Gly-10–Asp-41 form a disordered region. Positions Phe-42–Val-61 constitute a UIM 1 domain. Positions Ile-62–Glu-77 are enriched in basic and acidic residues. The segment at Ile-62 to Glu-91 is disordered. Over residues Thr-78–Glu-91 the composition is skewed to acidic residues. The region spanning Asp-87 to Arg-106 is the UIM 2 domain. A UIM 3; degenerate domain is found at Ala-122 to Met-141. The UIM 4 domain maps to Glu-149 to Pro-168. Position 166 is a phosphoserine (Ser-166). One can recognise an LIM zinc-binding domain in the interval Arg-188–Pro-248.

In terms of assembly, interacts with ubiquitin, TCP14 and TCP15. Polyubiquitinated by DA2.

Acts redundantly with DA1 and DAR2 to regulate endoreduplication during leaf development. Together with DA1 and DAR2, modulates the protein stability of the transcription factors TCP14 and TCP15, which repress endoreduplication by directly regulating the expression of cell-cycle genes. The protein is Protein DA1-related 1 of Arabidopsis thaliana (Mouse-ear cress).